A 548-amino-acid chain; its full sequence is Natural resistance-associated macrophage protein 1 (548 aa).

The tract at residues 1-38 (MSGDTGPPKQGGTRYGSISSPPSPEPQQAPPGGTYLSE) is disordered. At 1 to 55 (MSGDTGPPKQGGTRYGSISSPPSPEPQQAPPGGTYLSEKIPIPDTESGTFSLRKL) the chain is on the cytoplasmic side. Residues 56–73 (WAFTGPGFLMSIAFLDPG) traverse the membrane as a helical segment. The Extracellular segment spans residues 74–82 (NIESDLQAG). The chain crosses the membrane as a helical span at residues 83–102 (AVAGFKLLWVLLWATVLGLL). The Cytoplasmic segment spans residues 103–139 (CQRLAARLGVVTGKDLGEVCHLYYPKVPRILLWLTIE). A helical membrane pass occupies residues 140 to 160 (LAIVGSDMQEVIGTAIAFSLL). Topologically, residues 161–164 (SAGR) are extracellular. A helical transmembrane segment spans residues 165–184 (IPLWGGVLITIVDAFFFLFL). At 185–193 (DNYGLRKLE) the chain is on the cytoplasmic side. Residues 194–214 (AFFGFLITIMALTFGYEYVVA) traverse the membrane as a helical segment. The Extracellular segment spans residues 215–237 (QPAQGALLQGLFLPSCPGCGQPE). Residues 238–256 (LLQAVGIIGAIIMPHNIYL) traverse the membrane as a helical segment. Over 257–284 (HSSLVKSREVDRSRRADIREANMYFLIE) the chain is Cytoplasmic. A helical membrane pass occupies residues 285-304 (ATIALSVSFLINLFVMAVFG). Topologically, residues 305–346 (QAFYKQTNQAAFNICANSSLQDYAPIFPRNNLTVAVDIYQGG) are extracellular. N321 and N335 each carry an N-linked (GlcNAc...) asparagine glycan. The chain crosses the membrane as a helical span at residues 347–366 (VILGCLFGPAALYIWAVGLL). Topologically, residues 367-397 (AAGQSSTMTGTYAGQFVMEGFLKLRWSRFAR) are cytoplasmic. A helical transmembrane segment spans residues 398 to 415 (VLLTRSCAILPTVLLAVF). Residues 416 to 426 (RDLRDLSGLND) are Extracellular-facing. A helical transmembrane segment spans residues 427 to 447 (LLNVLQSLLLPFAVLPILTFT). The Cytoplasmic portion of the chain corresponds to 448–463 (SMPALMREFANGLVSK). The chain crosses the membrane as a helical span at residues 464-485 (VITSSIMVLVCAVNLYFVISYV). Topologically, residues 486–493 (PSLPHPAY) are extracellular. Residues 494 to 513 (FSLVALLAAAYLGLTTYLVW) traverse the membrane as a helical segment. At 514–548 (TCLITQGATLLAHSSHQRFLYGLPEEDQEKGRTSG) the chain is on the cytoplasmic side.

Belongs to the NRAMP family.

The protein localises to the late endosome membrane. The protein resides in the lysosome membrane. It catalyses the reaction Zn(2+)(in) + H(+)(out) = Zn(2+)(out) + H(+)(in). It carries out the reaction Fe(2+)(in) + H(+)(out) = Fe(2+)(out) + H(+)(in). The catalysed reaction is Mn(2+)(in) + H(+)(out) = Mn(2+)(out) + H(+)(in). Its function is as follows. Macrophage-specific antiporter that fluxes metal ions in either direction against a proton gradient. Localized to late endosomal lysosomal membranes, delivers bivalent cations from the cytosol into these acidic compartments where they may directly affect antimicrobial activity. Involved in iron metabolism and host natural resistance to infection with intracellular parasites. Pathogen resistance involves sequestration of Fe(2+) and Mn(2+), cofactors of both prokaryotic and eukaryotic catalases and superoxide dismutases, not only to protect the macrophage against its own generation of reactive oxygen species, but to deny the cations to the pathogen for synthesis of its protective enzymes. This is Natural resistance-associated macrophage protein 1 (SLC11A1) from Bison bison (American bison).